The sequence spans 397 residues: Acetate kinase (397 aa).

A Mg(2+)-binding site is contributed by Asn7. Lys14 lines the ATP pocket. Arg90 is a substrate binding site. Asp147 (proton donor/acceptor) is an active-site residue. ATP contacts are provided by residues 207 to 211 (HLGNG), 282 to 284 (DFR), and 330 to 334 (GIGEN). Glu384 lines the Mg(2+) pocket.

The protein belongs to the acetokinase family. Homodimer. Requires Mg(2+) as cofactor. Mn(2+) is required as a cofactor.

The protein localises to the cytoplasm. It catalyses the reaction acetate + ATP = acetyl phosphate + ADP. It participates in metabolic intermediate biosynthesis; acetyl-CoA biosynthesis; acetyl-CoA from acetate: step 1/2. In terms of biological role, catalyzes the formation of acetyl phosphate from acetate and ATP. Can also catalyze the reverse reaction. This Agathobacter rectalis (strain ATCC 33656 / DSM 3377 / JCM 17463 / KCTC 5835 / VPI 0990) (Eubacterium rectale) protein is Acetate kinase.